The chain runs to 456 residues: tRNA modification GTPase MnmE (456 aa).

(6S)-5-formyl-5,6,7,8-tetrahydrofolate is bound by residues arginine 24, glutamate 81, and lysine 120. Residues 216–379 (GMKVVIAGRP…LREHLKECIG (164 aa)) enclose the TrmE-type G domain. K(+) is bound at residue asparagine 226. GTP contacts are provided by residues 226–231 (NAGKSS), 245–251 (TAIEGTT), and 270–273 (DTAG). Residue serine 230 participates in Mg(2+) binding. 3 residues coordinate K(+): threonine 245, isoleucine 247, and threonine 250. Threonine 251 serves as a coordination point for Mg(2+). Residue lysine 456 coordinates (6S)-5-formyl-5,6,7,8-tetrahydrofolate.

Belongs to the TRAFAC class TrmE-Era-EngA-EngB-Septin-like GTPase superfamily. TrmE GTPase family. As to quaternary structure, homodimer. Heterotetramer of two MnmE and two MnmG subunits. The cofactor is K(+).

It is found in the cytoplasm. Functionally, exhibits a very high intrinsic GTPase hydrolysis rate. Involved in the addition of a carboxymethylaminomethyl (cmnm) group at the wobble position (U34) of certain tRNAs, forming tRNA-cmnm(5)s(2)U34. This is tRNA modification GTPase MnmE from Marinobacter nauticus (strain ATCC 700491 / DSM 11845 / VT8) (Marinobacter aquaeolei).